Consider the following 259-residue polypeptide: Hemin import ATP-binding protein HmuV (259 aa).

An ABC transporter domain is found at 8–242; that stretch reads ISANNISYRI…KMIENVYGHK (235 aa). 40 to 47 provides a ligand contact to ATP; the sequence is GPNGAGKS.

Belongs to the ABC transporter superfamily. Heme (hemin) importer (TC 3.A.1.14.5) family. As to quaternary structure, the complex is composed of two ATP-binding proteins (HmuV), two transmembrane proteins (HmuU) and a solute-binding protein (HmuT).

The protein localises to the cell inner membrane. Functionally, part of the ABC transporter complex HmuTUV involved in hemin import. Responsible for energy coupling to the transport system. In Aliivibrio fischeri (strain ATCC 700601 / ES114) (Vibrio fischeri), this protein is Hemin import ATP-binding protein HmuV.